Reading from the N-terminus, the 228-residue chain is MTQDELKALVAQAAADYVLANVPEGAVLGVGTGSTANLFIDAMAPHKARFAGAVSSSEASTRRLQGHGFTVLDLNEVDAIPVYVDGADEIDASGAMIKGGGGALTREKIVASVASVFVCIADGSKLVETMGAFPLPVEVVPMARAAVARQLAALGGQPRLRMTKEGQIYKTDNGNVIIDVVGLRIADPKGLESVVNEIPGVVTVGLFAKRGANVLLLGTEAGVQRRDF.

Residues 32–35, 85–88, and 98–101 contribute to the substrate site; these read TGST, DGAD, and KGGG. The active-site Proton acceptor is Glu107. Lys125 is a substrate binding site.

It belongs to the ribose 5-phosphate isomerase family. Homodimer.

The catalysed reaction is aldehydo-D-ribose 5-phosphate = D-ribulose 5-phosphate. It functions in the pathway carbohydrate degradation; pentose phosphate pathway; D-ribose 5-phosphate from D-ribulose 5-phosphate (non-oxidative stage): step 1/1. Functionally, catalyzes the reversible conversion of ribose-5-phosphate to ribulose 5-phosphate. This chain is Ribose-5-phosphate isomerase A, found in Ralstonia pickettii (strain 12J).